The primary structure comprises 283 residues: MRSPAKTMPSMSPSSVSTEKSPPPSDTSMAIVAFDNSTTHFSSSPSPPHSLDHSSESEKEDAKSKPESRRNKNPGKVEETPSPIVVVHNHNRSVKEVVPTRKSARVGSGRSSGQRSGAVSAILRRSRREEVVKFSALGFRLSEVVLALISFSIMAADKTKGWSGDSFDRYKEYRFCLSVNVVAFVYSSFQACDLAYHLVKEKHLISHHLRPLFEFIIDQVLAYLLMSASTAAVTRVDDWVSNWGKDEFTEMASASIAMSFLAFLAFAFSSLISGYNLFNQGSL.

Residues 1–86 are disordered; it reads MRSPAKTMPS…VEETPSPIVV (86 aa). Over 1-135 the chain is Cytoplasmic; it reads MRSPAKTMPS…SRREEVVKFS (135 aa). Low complexity predominate over residues 9–20; the sequence is PSMSPSSVSTEK. The segment covering 50–79 has biased composition (basic and acidic residues); it reads SLDHSSESEKEDAKSKPESRRNKNPGKVEE. The helical transmembrane segment at 136–156 threads the bilayer; it reads ALGFRLSEVVLALISFSIMAA. Residues 157-174 are Extracellular-facing; that stretch reads DKTKGWSGDSFDRYKEYR. Residues 175–195 traverse the membrane as a helical segment; it reads FCLSVNVVAFVYSSFQACDLA. The Cytoplasmic segment spans residues 196-212; that stretch reads YHLVKEKHLISHHLRPL. The helical transmembrane segment at 213 to 233 threads the bilayer; it reads FEFIIDQVLAYLLMSASTAAV. The Extracellular portion of the chain corresponds to 234 to 251; that stretch reads TRVDDWVSNWGKDEFTEM. Residues 252–272 traverse the membrane as a helical segment; sequence ASASIAMSFLAFLAFAFSSLI. Over 273-283 the chain is Cytoplasmic; the sequence is SGYNLFNQGSL.

This sequence belongs to the Casparian strip membrane proteins (CASP) family. As to quaternary structure, homodimer and heterodimers.

The protein localises to the cell membrane. This is CASP-like protein 4A3 from Arabidopsis thaliana (Mouse-ear cress).